We begin with the raw amino-acid sequence, 47 residues long: Large ribosomal subunit protein bL36B (47 aa).

It belongs to the bacterial ribosomal protein bL36 family.

This Pectobacterium atrosepticum (strain SCRI 1043 / ATCC BAA-672) (Erwinia carotovora subsp. atroseptica) protein is Large ribosomal subunit protein bL36B.